The primary structure comprises 329 residues: Anthranilate phosphoribosyltransferase (329 aa).

5-phospho-alpha-D-ribose 1-diphosphate is bound by residues Gly-78, 81-82 (GD), Thr-86, 88-91 (NLST), 106-114 (KHGNRSASG), and Ser-118. Anthranilate is bound at residue Gly-78. Mg(2+) is bound at residue Ser-90. Asn-109 lines the anthranilate pocket. Arg-164 serves as a coordination point for anthranilate. Residues Asp-221 and Glu-222 each contribute to the Mg(2+) site.

The protein belongs to the anthranilate phosphoribosyltransferase family. In terms of assembly, homodimer. Mg(2+) serves as cofactor.

The catalysed reaction is N-(5-phospho-beta-D-ribosyl)anthranilate + diphosphate = 5-phospho-alpha-D-ribose 1-diphosphate + anthranilate. It participates in amino-acid biosynthesis; L-tryptophan biosynthesis; L-tryptophan from chorismate: step 2/5. Its function is as follows. Catalyzes the transfer of the phosphoribosyl group of 5-phosphorylribose-1-pyrophosphate (PRPP) to anthranilate to yield N-(5'-phosphoribosyl)-anthranilate (PRA). This Pyrobaculum islandicum (strain DSM 4184 / JCM 9189 / GEO3) protein is Anthranilate phosphoribosyltransferase.